A 499-amino-acid polypeptide reads, in one-letter code: 6-hydroxynicotinate reductase (499 aa).

2 4Fe-4S ferredoxin-type domains span residues Met-1–Lys-29 and Lys-31–Pro-61. [4Fe-4S] cluster is bound by residues Cys-9, Cys-12, Cys-15, Cys-19, Cys-41, Cys-44, Cys-47, and Cys-51.

In terms of assembly, homotetramer. An oxidized flavin serves as cofactor. Requires [2Fe-2S] cluster as cofactor. [4Fe-4S] cluster is required as a cofactor.

The enzyme catalyses 1,4,5,6-tetrahydro-6-oxonicotinate + oxidized 2[4Fe-4S]-[ferredoxin] = 6-hydroxynicotinate + reduced 2[4Fe-4S]-[ferredoxin] + 2 H(+). The protein operates within cofactor degradation; nicotinate degradation; propanoate and pyruvate from 6-hydroxynicotinate: step 1/8. Its function is as follows. Catalyzes the reversible reduction of 6-hydroxynicotinate to 6-oxo-1,4,5,6-tetrahydronicotinate. The chain is 6-hydroxynicotinate reductase from Eubacterium barkeri (Clostridium barkeri).